A 465-amino-acid polypeptide reads, in one-letter code: ATP synthase subunit beta (465 aa).

152–159 (GGAGVGKT) lines the ATP pocket.

This sequence belongs to the ATPase alpha/beta chains family. In terms of assembly, F-type ATPases have 2 components, CF(1) - the catalytic core - and CF(0) - the membrane proton channel. CF(1) has five subunits: alpha(3), beta(3), gamma(1), delta(1), epsilon(1). CF(0) has three main subunits: a(1), b(2) and c(9-12). The alpha and beta chains form an alternating ring which encloses part of the gamma chain. CF(1) is attached to CF(0) by a central stalk formed by the gamma and epsilon chains, while a peripheral stalk is formed by the delta and b chains.

It localises to the cell inner membrane. The catalysed reaction is ATP + H2O + 4 H(+)(in) = ADP + phosphate + 5 H(+)(out). Its function is as follows. Produces ATP from ADP in the presence of a proton gradient across the membrane. The catalytic sites are hosted primarily by the beta subunits. This Campylobacter hominis (strain ATCC BAA-381 / DSM 21671 / CCUG 45161 / LMG 19568 / NCTC 13146 / CH001A) protein is ATP synthase subunit beta.